The sequence spans 590 residues: Zinc finger protein 285 (590 aa).

A KRAB domain is found at 8 to 86; it reads VTFKDVAVVF…WKQRIRDLTV (79 aa). A C2H2-type 1 zinc finger spans residues 232 to 254; the sequence is FPCNNCGVAFADDTDPHVHHSTH. The C2H2-type 2; degenerate zinc-finger motif lies at 260–282; that stretch reads YKCDQYGKNFSQSQDLIVHCKTH. C2H2-type zinc fingers lie at residues 316-338, 344-366, 372-394, 400-422, 428-450, 456-478, 484-506, 512-534, and 540-562; these read YKCKECGKGFRRSSSLHNHHRVH, YKCDECGKGFGFRSLLCIHQGVH, YKCEECGKGFDQSSNLLVHQRVH, YKCSECGKCFSSSSVLQVHWRFH, YRCGECGKGFSQCTHLHIHQRVH, YKCNVCGKDFAYSSVLHTHQRVH, YKCEVCGKCFSYSSYFHLHQRDH, YKCDECGKGFSRNSDLNVHLRVH, and YKCKACGKGFSRNSYLLAHQRVH.

It belongs to the krueppel C2H2-type zinc-finger protein family.

The protein resides in the nucleus. Functionally, may be involved in transcriptional regulation. In Homo sapiens (Human), this protein is Zinc finger protein 285 (ZNF285).